Consider the following 362-residue polypeptide: Probable cysteine protease RDL2 (362 aa).

Residues 1–28 (MAATPIRVIVSALVILSVLLLSSSLGVA) form the signal peptide. Residues 29–129 (TETEIERNET…ERYLYKEGDV (101 aa)) constitute a propeptide, activation peptide. An N-linked (GlcNAc...) asparagine glycan is attached at Asn-36. Cystine bridges form between Cys-151/Cys-194 and Cys-185/Cys-228. Cys-154 is an active-site residue. N-linked (GlcNAc...) asparagine glycosylation occurs at Asn-234. A disulfide bridge links Cys-287 with Cys-338. Active-site residues include His-293 and Asn-313.

It belongs to the peptidase C1 family.

Functionally, probable thiol protease. In Arabidopsis thaliana (Mouse-ear cress), this protein is Probable cysteine protease RDL2.